The sequence spans 171 residues: 6,7-dimethyl-8-ribityllumazine synthase (171 aa).

5-amino-6-(D-ribitylamino)uracil contacts are provided by residues Phe-30, 64-66, and 88-90; these read ALE and AVI. 93–94 contributes to the (2S)-2-hydroxy-3-oxobutyl phosphate binding site; it reads ET. His-96 functions as the Proton donor in the catalytic mechanism. Asn-121 contributes to the 5-amino-6-(D-ribitylamino)uracil binding site. Arg-135 contributes to the (2S)-2-hydroxy-3-oxobutyl phosphate binding site.

Belongs to the DMRL synthase family.

It carries out the reaction (2S)-2-hydroxy-3-oxobutyl phosphate + 5-amino-6-(D-ribitylamino)uracil = 6,7-dimethyl-8-(1-D-ribityl)lumazine + phosphate + 2 H2O + H(+). The protein operates within cofactor biosynthesis; riboflavin biosynthesis; riboflavin from 2-hydroxy-3-oxobutyl phosphate and 5-amino-6-(D-ribitylamino)uracil: step 1/2. Catalyzes the formation of 6,7-dimethyl-8-ribityllumazine by condensation of 5-amino-6-(D-ribitylamino)uracil with 3,4-dihydroxy-2-butanone 4-phosphate. This is the penultimate step in the biosynthesis of riboflavin. The sequence is that of 6,7-dimethyl-8-ribityllumazine synthase from Polynucleobacter necessarius subsp. necessarius (strain STIR1).